Consider the following 388-residue polypeptide: Putative pyridoxal phosphate-dependent aminotransferase EpsN (388 aa).

Lys-190 is modified (N6-(pyridoxal phosphate)lysine).

Belongs to the DegT/DnrJ/EryC1 family. Pyridoxal 5'-phosphate serves as cofactor.

Its function is as follows. May be involved in the production of the exopolysaccharide (EPS) component of the extracellular matrix during biofilm formation. EPS is responsible for the adhesion of chains of cells into bundles. The protein is Putative pyridoxal phosphate-dependent aminotransferase EpsN (epsN) of Bacillus subtilis (strain 168).